The sequence spans 246 residues: Salivary antigen SP32 (246 aa).

The signal sequence occupies residues Met1 to Ser23. A disordered region spans residues Asp51–Pro160. The span at Val65–Arg78 shows a compositional bias: basic and acidic residues. The span at Gln79–Arg124 shows a compositional bias: polar residues. Positions Gln141–Lys155 are enriched in basic and acidic residues.

As to quaternary structure, interacts with human DSG1. Interacts with human DSG3. As to expression, salivary gland (at protein level).

Its subcellular location is the secreted. In terms of biological role, down-regulates the expression of CD86 and HLA-DR on the surface of lipopolysaccharide (LPS)-stimulated human peripheral blood mononuclear cells (PBMCs). Reduces LPS-induced secretion of IL-1beta/IL1B in human PBMCs. Reduces LPS-induced secretion of various cytokines, such as IL-1beta, TNF-alpha/TNF, MCP-1/CCL2, IL6, IL27 and IL-1alpha/IL1A, in host cultured macrophages probably via inhibition of NF-kappa-B signaling pathway. Reduces production of IFN-gamma/IFNG, IL4 and IL6 in human lymphocytes activated with PMA/ionomycin. Exhibits anti-inflammatory activity in carrageenan-induced paw edema model in rats. The sequence is that of Salivary antigen SP32 from Phlebotomus papatasi (Sandfly).